A 204-amino-acid chain; its full sequence is High frequency lysogenization protein HflD homolog (204 aa).

This sequence belongs to the HflD family.

The protein localises to the cytoplasm. The protein resides in the cell inner membrane. The chain is High frequency lysogenization protein HflD homolog from Xanthomonas campestris pv. campestris (strain ATCC 33913 / DSM 3586 / NCPPB 528 / LMG 568 / P 25).